The following is a 309-amino-acid chain: Probable lipid kinase YegS-like (309 aa).

In terms of domain architecture, DAGKc spans 1 to 134 (MAPSHWRLIL…VDLLRIDADH (134 aa)). ATP is bound by residues T39, 65–71 (GDGTLSE), and T96. L219, D222, and L224 together coordinate Mg(2+). E280 functions as the Proton acceptor in the catalytic mechanism.

This sequence belongs to the diacylglycerol/lipid kinase family. YegS lipid kinase subfamily. Mg(2+) serves as cofactor. Requires Ca(2+) as cofactor.

The protein resides in the cytoplasm. In terms of biological role, probably phosphorylates lipids; the in vivo substrate is unknown. The polypeptide is Probable lipid kinase YegS-like (Xanthomonas axonopodis pv. citri (strain 306)).